A 369-amino-acid polypeptide reads, in one-letter code: Protein-glutamate methylesterase/protein-glutamine glutaminase (369 aa).

The Response regulatory domain occupies 4–121 (KVLVVDDSSF…ARNRDEAVSL (118 aa)). Aspartate 55 is modified (4-aspartylphosphate). The segment covering 146–171 (ATSSARPLASRTAAPAASAPARPATT) has biased composition (low complexity). The interval 146 to 175 (ATSSARPLASRTAAPAASAPARPATTKFRA) is disordered. The 194-residue stretch at 176 to 369 (SGKKYQLTAI…ERMLVEVGLA (194 aa)) folds into the CheB-type methylesterase domain. Active-site residues include serine 188, histidine 215, and aspartate 311.

Belongs to the CheB family. Post-translationally, phosphorylated by CheA. Phosphorylation of the N-terminal regulatory domain activates the methylesterase activity.

Its subcellular location is the cytoplasm. It catalyses the reaction [protein]-L-glutamate 5-O-methyl ester + H2O = L-glutamyl-[protein] + methanol + H(+). It carries out the reaction L-glutaminyl-[protein] + H2O = L-glutamyl-[protein] + NH4(+). Functionally, involved in chemotaxis. Part of a chemotaxis signal transduction system that modulates chemotaxis in response to various stimuli. Catalyzes the demethylation of specific methylglutamate residues introduced into the chemoreceptors (methyl-accepting chemotaxis proteins or MCP) by CheR. Also mediates the irreversible deamidation of specific glutamine residues to glutamic acid. The sequence is that of Protein-glutamate methylesterase/protein-glutamine glutaminase from Vibrio parahaemolyticus serotype O3:K6 (strain RIMD 2210633).